The primary structure comprises 490 residues: Proline--tRNA ligase (490 aa).

This sequence belongs to the class-II aminoacyl-tRNA synthetase family. ProS type 3 subfamily. Homodimer.

Its subcellular location is the cytoplasm. The enzyme catalyses tRNA(Pro) + L-proline + ATP = L-prolyl-tRNA(Pro) + AMP + diphosphate. Catalyzes the attachment of proline to tRNA(Pro) in a two-step reaction: proline is first activated by ATP to form Pro-AMP and then transferred to the acceptor end of tRNA(Pro). This Salinibacter ruber (strain DSM 13855 / M31) protein is Proline--tRNA ligase.